We begin with the raw amino-acid sequence, 313 residues long: MGNRKRPGRPISGVIVIDKPAGDSSNGVLQRVKRLFFANKAGHTGSLDPLATGVLPVCFGDATKFSQFLLDSDKEYVSTFRFGEVTDTADSDGEVLESIDASKLTKADVLKAIKAYIGDIDQVPPMYSALKRNGQPLYKLARQGIEVEREPRPVTVYEFELLAFRPGAVAEADVRVFCSKGTYIRSLASDIGADLELGGHVAKLRRTQAGPFTIDQSITIEELEQERGERLAEVLDHHLLPTDIAVADFPSLELDDNSAFYFSRGQAVMDSRVYRLGDEGDKVRVFDSSGKFYGVAEITDEGTVAPKRLVSQS.

Asp-48 acts as the Nucleophile in catalysis.

It belongs to the pseudouridine synthase TruB family. Type 1 subfamily.

It catalyses the reaction uridine(55) in tRNA = pseudouridine(55) in tRNA. Functionally, responsible for synthesis of pseudouridine from uracil-55 in the psi GC loop of transfer RNAs. The chain is tRNA pseudouridine synthase B from Saccharophagus degradans (strain 2-40 / ATCC 43961 / DSM 17024).